A 21-amino-acid polypeptide reads, in one-letter code: Azemiopsin (21 aa).

A compositionally biased stretch (pro residues) spans 1–14 (DNWWPKPPHQGPRP). A disordered region spans residues 1-21 (DNWWPKPPHQGPRPPRPRPKP). 3 implicated in receptor binding regions span residues 3 to 6 (WWPK), 8 to 11 (PHQG), and 13 to 14 (RP).

Monomer. As to expression, expressed by the venom gland.

It localises to the secreted. Functionally, in vitro, reversibly blocks human muscle-type nicotinic acetylcholine receptors (nAChR) alpha-1-beta-1-epsilon-delta/CHRNA1-CHRNB1-CHRNE-CHRND (EC(50)=0.44 uM) and alpha-1-beta-1-gamma-delta/CHRNA1-CHRNB1-CHRNG-CHRND (EC(50)=1.56 uM). Binds to nAChR from T.californica (IC(50)=0.03-0.18 uM), human neuronal nAChR alpha-7/CHRNA7 (IC(50)=22 uM) and acetylcholine-binding proteins (AChBP) from L.stagnalis (IC(50)=63 uM) and A.californica (IC(50)=230 uM). This chain is Azemiopsin, found in Azemiops feae (Fea's viper).